A 122-amino-acid polypeptide reads, in one-letter code: Aspartate 1-decarboxylase (122 aa).

Ser-25 functions as the Schiff-base intermediate with substrate; via pyruvic acid in the catalytic mechanism. Position 25 is a pyruvic acid (Ser) (Ser-25). Substrate is bound at residue Thr-57. Catalysis depends on Tyr-58, which acts as the Proton donor. A substrate-binding site is contributed by 73–75 (GAA).

Belongs to the PanD family. Heterooctamer of four alpha and four beta subunits. Requires pyruvate as cofactor. Post-translationally, is synthesized initially as an inactive proenzyme, which is activated by self-cleavage at a specific serine bond to produce a beta-subunit with a hydroxyl group at its C-terminus and an alpha-subunit with a pyruvoyl group at its N-terminus.

Its subcellular location is the cytoplasm. It catalyses the reaction L-aspartate + H(+) = beta-alanine + CO2. The protein operates within cofactor biosynthesis; (R)-pantothenate biosynthesis; beta-alanine from L-aspartate: step 1/1. Its function is as follows. Catalyzes the pyruvoyl-dependent decarboxylation of aspartate to produce beta-alanine. The polypeptide is Aspartate 1-decarboxylase (Bordetella parapertussis (strain 12822 / ATCC BAA-587 / NCTC 13253)).